The following is a 665-amino-acid chain: Transketolase (665 aa).

His26 is a substrate binding site. Residues His66 and 114–116 (GPL) contribute to the thiamine diphosphate site. Asp155 is a binding site for Mg(2+). The thiamine diphosphate site is built by Gly156 and Asn185. Mg(2+) is bound by residues Asn185 and Ile187. Substrate is bound by residues His261, Arg358, and Ser385. His261 is a thiamine diphosphate binding site. Catalysis depends on Glu411, which acts as the Proton donor. Phe437 serves as a coordination point for thiamine diphosphate. His461, Asp469, and Arg520 together coordinate substrate.

The protein belongs to the transketolase family. In terms of assembly, homodimer. Requires Mg(2+) as cofactor. Ca(2+) is required as a cofactor. The cofactor is Mn(2+). Co(2+) serves as cofactor. It depends on thiamine diphosphate as a cofactor.

It catalyses the reaction D-sedoheptulose 7-phosphate + D-glyceraldehyde 3-phosphate = aldehydo-D-ribose 5-phosphate + D-xylulose 5-phosphate. In terms of biological role, catalyzes the transfer of a two-carbon ketol group from a ketose donor to an aldose acceptor, via a covalent intermediate with the cofactor thiamine pyrophosphate. This Buchnera aphidicola subsp. Schizaphis graminum (strain Sg) protein is Transketolase (tkt).